A 348-amino-acid chain; its full sequence is MRWLFWSSGSQQAPNNKDNNNSNNNDDDDDDYDNNINKRPPLTPESPSPSHPPCASCSTQATASFSNPRRDWNTSLTAHDWAGEFKDPRNLIPTLLLTGGILFCVRIHRQYLRRIPLATNISPTYFHKRSLFGRVTSVGDGDNFRMYHTPGGRLAGWEWLPFRRVPRVKKELKDRTIHIRLAGIDAPELPHFGRPAQPYSHAAHTWLTNYLLNKRVRVFPYRQDQYGRVVATVYVRRFPWIFLRRDVGLQMLRAGMATVYEAKSGVEFGGEGKESKYRRAEEVAKRRGRGLWKGWKGVGWESPREYKNRMAGVEGEKAAAAAAAAAAAAAAAAGVGGMGELGVNGEKN.

The tract at residues 1–70 (MRWLFWSSGS…ATASFSNPRR (70 aa)) is disordered. Positions 15–24 (NNKDNNNSNN) are enriched in low complexity. Over residues 41 to 52 (PLTPESPSPSHP) the composition is skewed to pro residues. Residues 59 to 70 (TQATASFSNPRR) are compositionally biased toward polar residues. Residues 91 to 107 (LIPTLLLTGGILFCVRI) form a helical membrane-spanning segment. Positions 129-294 (RSLFGRVTSV…KRRGRGLWKG (166 aa)) constitute a TNase-like domain. Arg180 is a catalytic residue. Residue Asp185 participates in Ca(2+) binding. Catalysis depends on residues Glu188 and Arg228.

The protein belongs to the LCL3 family.

It is found in the mitochondrion. The protein localises to the membrane. This chain is Probable endonuclease LCL3 (LCL3), found in Paracoccidioides lutzii (strain ATCC MYA-826 / Pb01) (Paracoccidioides brasiliensis).